Reading from the N-terminus, the 325-residue chain is MKIFDYEDIQLIPNKCIVESRSECNTSVKFGPRTFKLPVVPANMQTVMNEELAQWFAENDYFYIMHRFNEENRIPFIKKMHHAGLFASISVGVKENEFNFIEKLASSSLIPEYITIDIAHGHSNSVINMIKHIKKHLPNSFVIAGNVGTPEGVRELENAGADATKVGIGPGRVCITKIKTGFGTGGWQLSALNLCNKAARKPIIADGGLRTHGDIAKSIRFGATMVMIGSLFAAHEESPGETVELDGKKYKEYFGSASEYQKGEHKNVEGKKMFVEHKGSLKDTLTEMEQDLQSSISYAGGKDLKSLRTVDYVIVRNSIFNGDRD.

Residue Cys174 is the Thioimidate intermediate of the active site. 203–226 (IIADGGLRTHGDIAKSIRFGATMV) provides a ligand contact to NADP(+).

This sequence belongs to the IMPDH/GMPR family. GuaC type 2 subfamily.

The enzyme catalyses IMP + NH4(+) + NADP(+) = GMP + NADPH + 2 H(+). Functionally, catalyzes the irreversible NADPH-dependent deamination of GMP to IMP. It functions in the conversion of nucleobase, nucleoside and nucleotide derivatives of G to A nucleotides, and in maintaining the intracellular balance of A and G nucleotides. The chain is GMP reductase from Staphylococcus epidermidis (strain ATCC 35984 / DSM 28319 / BCRC 17069 / CCUG 31568 / BM 3577 / RP62A).